Consider the following 413-residue polypeptide: Serine hydroxymethyltransferase (413 aa).

(6S)-5,6,7,8-tetrahydrofolate-binding positions include Leu-119 and 123–125 (GHL). An N6-(pyridoxal phosphate)lysine modification is found at Lys-228. Residue 351 to 353 (SPF) coordinates (6S)-5,6,7,8-tetrahydrofolate.

Belongs to the SHMT family. Homodimer. Pyridoxal 5'-phosphate serves as cofactor.

It localises to the cytoplasm. The enzyme catalyses (6R)-5,10-methylene-5,6,7,8-tetrahydrofolate + glycine + H2O = (6S)-5,6,7,8-tetrahydrofolate + L-serine. Its pathway is one-carbon metabolism; tetrahydrofolate interconversion. It participates in amino-acid biosynthesis; glycine biosynthesis; glycine from L-serine: step 1/1. In terms of biological role, catalyzes the reversible interconversion of serine and glycine with tetrahydrofolate (THF) serving as the one-carbon carrier. This reaction serves as the major source of one-carbon groups required for the biosynthesis of purines, thymidylate, methionine, and other important biomolecules. Also exhibits THF-independent aldolase activity toward beta-hydroxyamino acids, producing glycine and aldehydes, via a retro-aldol mechanism. The sequence is that of Serine hydroxymethyltransferase from Lysinibacillus sphaericus (strain C3-41).